We begin with the raw amino-acid sequence, 364 residues long: Histidinol-phosphate aminotransferase 2 (364 aa).

The residue at position 223 (Lys-223) is an N6-(pyridoxal phosphate)lysine.

It belongs to the class-II pyridoxal-phosphate-dependent aminotransferase family. Histidinol-phosphate aminotransferase subfamily. As to quaternary structure, homodimer. The cofactor is pyridoxal 5'-phosphate.

It catalyses the reaction L-histidinol phosphate + 2-oxoglutarate = 3-(imidazol-4-yl)-2-oxopropyl phosphate + L-glutamate. Its pathway is amino-acid biosynthesis; L-histidine biosynthesis; L-histidine from 5-phospho-alpha-D-ribose 1-diphosphate: step 7/9. The polypeptide is Histidinol-phosphate aminotransferase 2 (hisC2) (Oceanobacillus iheyensis (strain DSM 14371 / CIP 107618 / JCM 11309 / KCTC 3954 / HTE831)).